The following is a 148-amino-acid chain: Large ribosomal subunit protein bL9 (148 aa).

This sequence belongs to the bacterial ribosomal protein bL9 family.

Functionally, binds to the 23S rRNA. The sequence is that of Large ribosomal subunit protein bL9 from Thermobifida fusca (strain YX).